We begin with the raw amino-acid sequence, 541 residues long: 2-succinyl-5-enolpyruvyl-6-hydroxy-3-cyclohexene-1-carboxylate synthase (541 aa).

It belongs to the TPP enzyme family. MenD subfamily. As to quaternary structure, homodimer. Mg(2+) is required as a cofactor. The cofactor is Mn(2+). It depends on thiamine diphosphate as a cofactor.

It catalyses the reaction isochorismate + 2-oxoglutarate + H(+) = 5-enolpyruvoyl-6-hydroxy-2-succinyl-cyclohex-3-ene-1-carboxylate + CO2. It participates in quinol/quinone metabolism; 1,4-dihydroxy-2-naphthoate biosynthesis; 1,4-dihydroxy-2-naphthoate from chorismate: step 2/7. The protein operates within quinol/quinone metabolism; menaquinone biosynthesis. Catalyzes the thiamine diphosphate-dependent decarboxylation of 2-oxoglutarate and the subsequent addition of the resulting succinic semialdehyde-thiamine pyrophosphate anion to isochorismate to yield 2-succinyl-5-enolpyruvyl-6-hydroxy-3-cyclohexene-1-carboxylate (SEPHCHC). The chain is 2-succinyl-5-enolpyruvyl-6-hydroxy-3-cyclohexene-1-carboxylate synthase from Rhodococcus jostii (strain RHA1).